The following is a 203-amino-acid chain: Xrcc4-like factor 1 (203 aa).

Belongs to the XRCC4-XLF family. XLF subfamily.

The protein resides in the nucleus. Involved in double-strand break repair via non-homologous end joining (NHEJ); the repair of a double-strand break in DNA in which the two broken ends are rejoined with little or no sequence complementarity. Has a role in meiosis. This is Xrcc4-like factor 1 (xlf1) from Schizosaccharomyces pombe (strain 972 / ATCC 24843) (Fission yeast).